The following is a 127-amino-acid chain: Fatty acid-binding protein, liver (127 aa).

N-acetylmethionine is present on methionine 1. Serine 11 carries the phosphoserine modification. 2 positions are modified to N6-succinyllysine: lysine 31 and lysine 36. Serine 39 bears the Phosphoserine mark. Residue lysine 46 is modified to N6-succinyllysine. Threonine 51 bears the Phosphothreonine mark. N6-succinyllysine is present on residues lysine 57 and lysine 78. Lysine 84 carries the post-translational modification N6-acetyllysine; alternate. Lysine 84 bears the N6-succinyllysine; alternate mark. Lysine 90 is modified (N6-succinyllysine). At serine 100 the chain carries Phosphoserine. Lysine 121 is subject to N6-succinyllysine.

The protein belongs to the calycin superfamily. Fatty-acid binding protein (FABP) family.

It is found in the cytoplasm. In terms of biological role, plays a role in lipoprotein-mediated cholesterol uptake in hepatocytes. Binds cholesterol. Binds free fatty acids and their coenzyme A derivatives, bilirubin, and some other small molecules in the cytoplasm. May be involved in intracellular lipid transport. In Mus musculus (Mouse), this protein is Fatty acid-binding protein, liver (Fabp1).